Consider the following 183-residue polypeptide: Large ribosomal subunit protein uL5 (183 aa).

Belongs to the universal ribosomal protein uL5 family. In terms of assembly, part of the 50S ribosomal subunit; part of the 5S rRNA/L5/L18/L25 subcomplex. Contacts the 5S rRNA and the P site tRNA. Forms a bridge to the 30S subunit in the 70S ribosome.

In terms of biological role, this is one of the proteins that bind and probably mediate the attachment of the 5S RNA into the large ribosomal subunit, where it forms part of the central protuberance. In the 70S ribosome it contacts protein S13 of the 30S subunit (bridge B1b), connecting the 2 subunits; this bridge is implicated in subunit movement. Contacts the P site tRNA; the 5S rRNA and some of its associated proteins might help stabilize positioning of ribosome-bound tRNAs. This chain is Large ribosomal subunit protein uL5, found in Christiangramia forsetii (strain DSM 17595 / CGMCC 1.15422 / KT0803) (Gramella forsetii).